The sequence spans 256 residues: 14-3-3-like protein GF14-C (256 aa).

It belongs to the 14-3-3 family. In terms of assembly, may form a complex with the transcriptional activator VP1 and the bZIP transcription factor EMBP1. Expressed in seedlings, internodes and panicles.

Its subcellular location is the cytoplasm. The protein resides in the nucleus. In terms of biological role, is associated with a DNA binding complex that binds to the G box, a well-characterized cis-acting DNA regulatory element found in plant genes. The protein is 14-3-3-like protein GF14-C (GF14C) of Oryza sativa subsp. japonica (Rice).